The sequence spans 691 residues: Methionine--tRNA ligase (691 aa).

Residues 12–22 (PYANGSFHIGH) carry the 'HIGH' region motif. The Zn(2+) site is built by Cys-143, Cys-146, Cys-156, and Cys-159. Residues 341–345 (KMSKS) carry the 'KMSKS' region motif. ATP is bound at residue Lys-344. In terms of domain architecture, tRNA-binding spans 585–691 (DFVKVDLRIA…PGAQPGMRIH (107 aa)).

Belongs to the class-I aminoacyl-tRNA synthetase family. MetG type 1 subfamily. Homodimer. Zn(2+) serves as cofactor.

It localises to the cytoplasm. The enzyme catalyses tRNA(Met) + L-methionine + ATP = L-methionyl-tRNA(Met) + AMP + diphosphate. Functionally, is required not only for elongation of protein synthesis but also for the initiation of all mRNA translation through initiator tRNA(fMet) aminoacylation. The sequence is that of Methionine--tRNA ligase from Bordetella avium (strain 197N).